Here is a 338-residue protein sequence, read N- to C-terminus: tRNA dimethylallyltransferase (338 aa).

13-20 (GPTASGKT) contributes to the ATP binding site. 15–20 (TASGKT) is a substrate binding site. Interaction with substrate tRNA regions lie at residues 38–41 (DSTL) and 162–166 (QRVSR).

It belongs to the IPP transferase family. As to quaternary structure, monomer. Mg(2+) serves as cofactor.

It carries out the reaction adenosine(37) in tRNA + dimethylallyl diphosphate = N(6)-dimethylallyladenosine(37) in tRNA + diphosphate. Catalyzes the transfer of a dimethylallyl group onto the adenine at position 37 in tRNAs that read codons beginning with uridine, leading to the formation of N6-(dimethylallyl)adenosine (i(6)A). The protein is tRNA dimethylallyltransferase of Cellvibrio japonicus (strain Ueda107) (Pseudomonas fluorescens subsp. cellulosa).